The chain runs to 371 residues: Aspartate-semialdehyde dehydrogenase (371 aa).

NADP(+) contacts are provided by residues 11 to 14 (RGMV), 38 to 39 (TS), and Q75. R104 contacts phosphate. The active-site Acyl-thioester intermediate is the C137. Q164 contributes to the substrate binding site. 167–168 (SG) lines the NADP(+) pocket. E243 provides a ligand contact to substrate. K246 contacts phosphate. Substrate is bound at residue R269. The active-site Proton acceptor is H276. Q352 is a binding site for NADP(+).

The protein belongs to the aspartate-semialdehyde dehydrogenase family. As to quaternary structure, homodimer.

It catalyses the reaction L-aspartate 4-semialdehyde + phosphate + NADP(+) = 4-phospho-L-aspartate + NADPH + H(+). The protein operates within amino-acid biosynthesis; L-lysine biosynthesis via DAP pathway; (S)-tetrahydrodipicolinate from L-aspartate: step 2/4. It participates in amino-acid biosynthesis; L-methionine biosynthesis via de novo pathway; L-homoserine from L-aspartate: step 2/3. It functions in the pathway amino-acid biosynthesis; L-threonine biosynthesis; L-threonine from L-aspartate: step 2/5. Its function is as follows. Catalyzes the NADPH-dependent formation of L-aspartate-semialdehyde (L-ASA) by the reductive dephosphorylation of L-aspartyl-4-phosphate. This is Aspartate-semialdehyde dehydrogenase from Buchnera aphidicola subsp. Acyrthosiphon pisum (strain APS) (Acyrthosiphon pisum symbiotic bacterium).